A 239-amino-acid chain; its full sequence is Large ribosomal subunit protein uL3 (239 aa).

2 disordered regions span residues 140–166 and 211–239; these read SHRS…PGHM and PLPK…QEGA. The residue at position 151 (Gln151) is an N5-methylglutamine.

Belongs to the universal ribosomal protein uL3 family. Part of the 50S ribosomal subunit. Forms a cluster with proteins L14 and L19. In terms of processing, methylated by PrmB.

One of the primary rRNA binding proteins, it binds directly near the 3'-end of the 23S rRNA, where it nucleates assembly of the 50S subunit. This is Large ribosomal subunit protein uL3 from Bradyrhizobium sp. (strain BTAi1 / ATCC BAA-1182).